Reading from the N-terminus, the 218-residue chain is uncharacterized protein (218 aa).

Residues 1–28 (MLSLQCLPPFFISVPNRSTNSCSTAPLR) constitute a chloroplast transit peptide.

This sequence belongs to the SixA phosphatase family.

It is found in the plastid. The protein resides in the chloroplast. This is an uncharacterized protein from Arabidopsis thaliana (Mouse-ear cress).